We begin with the raw amino-acid sequence, 878 residues long: NUT family member 2E (878 aa).

Disordered regions lie at residues 273 to 324 (WSQG…DDSC), 417 to 511 (QKSQ…VPEE), 527 to 560 (LLGP…PPDP), 622 to 757 (RLPP…EEEE), and 775 to 878 (WLPQ…HCSQ). 2 stretches are compositionally biased toward pro residues: residues 278–288 (PLPPPPPPAAQ) and 427–444 (CLPP…PPAP). Composition is skewed to basic and acidic residues over residues 537-551 (EPEK…KQPQ) and 622-631 (RLPPLKEKQH).

It belongs to the NUT family.

This is NUT family member 2E (NUTM2E) from Homo sapiens (Human).